The primary structure comprises 155 residues: Large ribosomal subunit protein uL30 (155 aa).

Belongs to the universal ribosomal protein uL30 family. Part of the 50S ribosomal subunit.

The protein is Large ribosomal subunit protein uL30 of Pyrococcus abyssi (strain GE5 / Orsay).